A 384-amino-acid polypeptide reads, in one-letter code: Anhydro-N-acetylmuramic acid kinase (384 aa).

17–24 (GTSMDGVD) lines the ATP pocket.

Belongs to the anhydro-N-acetylmuramic acid kinase family.

It carries out the reaction 1,6-anhydro-N-acetyl-beta-muramate + ATP + H2O = N-acetyl-D-muramate 6-phosphate + ADP + H(+). Its pathway is amino-sugar metabolism; 1,6-anhydro-N-acetylmuramate degradation. The protein operates within cell wall biogenesis; peptidoglycan recycling. Functionally, catalyzes the specific phosphorylation of 1,6-anhydro-N-acetylmuramic acid (anhMurNAc) with the simultaneous cleavage of the 1,6-anhydro ring, generating MurNAc-6-P. Is required for the utilization of anhMurNAc either imported from the medium or derived from its own cell wall murein, and thus plays a role in cell wall recycling. The sequence is that of Anhydro-N-acetylmuramic acid kinase from Burkholderia thailandensis (strain ATCC 700388 / DSM 13276 / CCUG 48851 / CIP 106301 / E264).